The primary structure comprises 337 residues: Viral cathepsin (337 aa).

The N-terminal stretch at 1–16 is a signal peptide; the sequence is MNKLLILFLLLNAALT. A propeptide spans 17-126 (activation peptide); it reads RQDNHASANN…VVDGPAQRQR (110 aa). 3 cysteine pairs are disulfide-bonded: cysteine 147–cysteine 188, cysteine 181–cysteine 221, and cysteine 276–cysteine 324. The active site involves cysteine 150. Active-site residues include histidine 283 and asparagine 303.

Belongs to the peptidase C1 family. Post-translationally, synthesized as an inactive proenzyme and activated by proteolytic removal of the inhibitory propeptide.

It carries out the reaction Endopeptidase of broad specificity, hydrolyzing substrates of both cathepsin L and cathepsin B.. In terms of biological role, cysteine protease that plays an essential role in host liquefaction to facilitate horizontal transmission of the virus. May participate in the degradation of foreign protein expressed by the baculovirus system. The chain is Viral cathepsin (VCATH) from Lepidoptera (butterflies and moths).